The chain runs to 414 residues: CCA-adding enzyme (414 aa).

ATP-binding residues include G8 and R11. G8 and R11 together coordinate CTP. Mg(2+)-binding residues include D21 and D23. 3 residues coordinate ATP: R91, R137, and R140. CTP is bound by residues R91, R137, and R140.

This sequence belongs to the tRNA nucleotidyltransferase/poly(A) polymerase family. Bacterial CCA-adding enzyme type 2 subfamily. It depends on Mg(2+) as a cofactor.

It catalyses the reaction a tRNA precursor + 2 CTP + ATP = a tRNA with a 3' CCA end + 3 diphosphate. The enzyme catalyses a tRNA with a 3' CCA end + 2 CTP + ATP = a tRNA with a 3' CCACCA end + 3 diphosphate. Its function is as follows. Catalyzes the addition and repair of the essential 3'-terminal CCA sequence in tRNAs without using a nucleic acid template. Adds these three nucleotides in the order of C, C, and A to the tRNA nucleotide-73, using CTP and ATP as substrates and producing inorganic pyrophosphate. tRNA 3'-terminal CCA addition is required both for tRNA processing and repair. Also involved in tRNA surveillance by mediating tandem CCA addition to generate a CCACCA at the 3' terminus of unstable tRNAs. While stable tRNAs receive only 3'-terminal CCA, unstable tRNAs are marked with CCACCA and rapidly degraded. This chain is CCA-adding enzyme, found in Buchnera aphidicola subsp. Acyrthosiphon pisum (strain 5A).